The chain runs to 208 residues: Small ribosomal subunit protein uS4 (208 aa).

Residues 98 to 158 enclose the S4 RNA-binding domain; it reads RRLDNVVYRL…EKSRKIACIN (61 aa).

The protein belongs to the universal ribosomal protein uS4 family. In terms of assembly, part of the 30S ribosomal subunit. Contacts protein S5. The interaction surface between S4 and S5 is involved in control of translational fidelity.

Functionally, one of the primary rRNA binding proteins, it binds directly to 16S rRNA where it nucleates assembly of the body of the 30S subunit. In terms of biological role, with S5 and S12 plays an important role in translational accuracy. In Geobacter sulfurreducens (strain ATCC 51573 / DSM 12127 / PCA), this protein is Small ribosomal subunit protein uS4.